A 524-amino-acid chain; its full sequence is Serine/threonine-protein phosphatase 2A 56 kDa regulatory subunit gamma isoform (524 aa).

Position 1 is an N-acetylmethionine (methionine 1). The disordered stretch occupies residues serine 476–alanine 508.

The protein belongs to the phosphatase 2A regulatory subunit B56 family. In terms of assembly, PP2A consists of a common heterodimeric core enzyme, composed of PPP2CA a 36 kDa catalytic subunit (subunit C) and PPP2R1A a 65 kDa constant regulatory subunit (PR65 or subunit A), that associates with a variety of regulatory subunits. Proteins that associate with the core dimer include three families of regulatory subunits B (the R2/B/PR55/B55, R3/B''/PR72/PR130/PR59 and R5/B'/B56 families), the 48 kDa variable regulatory subunit, viral proteins, and cell signaling molecules. Interacts with SGO1. Interacts with SGO1; the interaction is direct. May interact with TP53. Interacts with IER3 and/or ERK kinases; regulates ERK dephosphorylation. Interacts with CIP2A; this interaction stabilizes CIP2A. As to expression, highest levels in heart, liver and brain. Lower levels in skeletal muscle, spleen, kidney and lung. Isoform 4 is testis-specific.

Its subcellular location is the nucleus. It is found in the chromosome. The protein resides in the centromere. Its function is as follows. The B regulatory subunit might modulate substrate selectivity and catalytic activity, and might also direct the localization of the catalytic enzyme to a particular subcellular compartment. The PP2A-PPP2R5C holoenzyme may activate TP53 and play a role in DNA damage-induced inhibition of cell proliferation. PP2A-PPP2R5C may also regulate the ERK signaling pathway through ERK dephosphorylation. This chain is Serine/threonine-protein phosphatase 2A 56 kDa regulatory subunit gamma isoform (Ppp2r5c), found in Mus musculus (Mouse).